The sequence spans 420 residues: Probable pectate lyase C (420 aa).

The first 20 residues, 1–20 (MKLSEPLLVSLAAFSQAVTA), serve as a signal peptide directing secretion. 3 N-linked (GlcNAc...) asparagine glycosylation sites follow: Asn-49, Asn-165, and Asn-202. Arg-205 is a catalytic residue. Residues 262-297 (NANFHGYVQNNYYDPDKDGQLDGFELGVSSSNYGGM) enclose the EF-hand domain. Ca(2+) is bound by residues Asp-275, Asp-277, Asp-279, Gln-281, and Glu-286. The interval 358-396 (TMGGPGTLNGGTPAKDTDGDGIPDEAEKQLGTDPNTNDS) is disordered. The N-linked (GlcNAc...) asparagine glycan is linked to Asn-394.

Belongs to the polysaccharide lyase 1 family. The cofactor is Ca(2+).

The protein localises to the secreted. It catalyses the reaction Eliminative cleavage of (1-&gt;4)-alpha-D-galacturonan to give oligosaccharides with 4-deoxy-alpha-D-galact-4-enuronosyl groups at their non-reducing ends.. Its function is as follows. Pectinolytic enzyme consist of four classes of enzymes: pectin lyase, polygalacturonase, pectin methylesterase and rhamnogalacturonase. Among pectinolytic enzymes, pectin lyase is the most important in depolymerization of pectin, since it cleaves internal glycosidic bonds of highly methylated pectins. Favors pectate, the anion, over pectin, the methyl ester. The protein is Probable pectate lyase C (plyC) of Aspergillus fumigatus (strain ATCC MYA-4609 / CBS 101355 / FGSC A1100 / Af293) (Neosartorya fumigata).